The primary structure comprises 271 residues: Glutamate racemase (271 aa).

Residues 10 to 11 and 42 to 43 contribute to the substrate site; these read DS and YG. Cysteine 74 acts as the Proton donor/acceptor in catalysis. 75–76 is a binding site for substrate; sequence NT. Cysteine 189 serves as the catalytic Proton donor/acceptor. Position 190 to 191 (190 to 191) interacts with substrate; the sequence is TH.

The protein belongs to the aspartate/glutamate racemases family.

The catalysed reaction is L-glutamate = D-glutamate. The protein operates within cell wall biogenesis; peptidoglycan biosynthesis. Its function is as follows. Provides the (R)-glutamate required for cell wall biosynthesis. This chain is Glutamate racemase, found in Bartonella bacilliformis (strain ATCC 35685 / KC583 / Herrer 020/F12,63).